The primary structure comprises 424 residues: Serine--tRNA ligase (424 aa).

232–234 is an L-serine binding site; sequence TAE. 263–265 lines the ATP pocket; the sequence is RQE. Position 286 (Glu286) interacts with L-serine. 350–353 is an ATP binding site; that stretch reads EIGS. An L-serine-binding site is contributed by Ser386.

This sequence belongs to the class-II aminoacyl-tRNA synthetase family. Type-1 seryl-tRNA synthetase subfamily. As to quaternary structure, homodimer. The tRNA molecule binds across the dimer.

It localises to the cytoplasm. The enzyme catalyses tRNA(Ser) + L-serine + ATP = L-seryl-tRNA(Ser) + AMP + diphosphate + H(+). The catalysed reaction is tRNA(Sec) + L-serine + ATP = L-seryl-tRNA(Sec) + AMP + diphosphate + H(+). Its pathway is aminoacyl-tRNA biosynthesis; selenocysteinyl-tRNA(Sec) biosynthesis; L-seryl-tRNA(Sec) from L-serine and tRNA(Sec): step 1/1. In terms of biological role, catalyzes the attachment of serine to tRNA(Ser). Is also able to aminoacylate tRNA(Sec) with serine, to form the misacylated tRNA L-seryl-tRNA(Sec), which will be further converted into selenocysteinyl-tRNA(Sec). The polypeptide is Serine--tRNA ligase (Onion yellows phytoplasma (strain OY-M)).